Reading from the N-terminus, the 556-residue chain is Urocanate hydratase (556 aa).

NAD(+) contacts are provided by residues 52–53, glutamine 130, 176–178, glutamate 196, arginine 201, 243–244, 264–268, 274–275, and tyrosine 323; these read GG, GMG, NA, QTSAH, and YL. Residue cysteine 411 is part of the active site. Residue glycine 493 coordinates NAD(+).

Belongs to the urocanase family. Requires NAD(+) as cofactor.

It is found in the cytoplasm. It catalyses the reaction 4-imidazolone-5-propanoate = trans-urocanate + H2O. It functions in the pathway amino-acid degradation; L-histidine degradation into L-glutamate; N-formimidoyl-L-glutamate from L-histidine: step 2/3. Its function is as follows. Catalyzes the conversion of urocanate to 4-imidazolone-5-propionate. This chain is Urocanate hydratase, found in Rhodospirillum rubrum (strain ATCC 11170 / ATH 1.1.1 / DSM 467 / LMG 4362 / NCIMB 8255 / S1).